We begin with the raw amino-acid sequence, 176 residues long: ATP-dependent protease subunit HslV (176 aa).

T5 is a catalytic residue. Na(+)-binding residues include S161, C164, and T167.

The protein belongs to the peptidase T1B family. HslV subfamily. As to quaternary structure, a double ring-shaped homohexamer of HslV is capped on each side by a ring-shaped HslU homohexamer. The assembly of the HslU/HslV complex is dependent on binding of ATP.

The protein localises to the cytoplasm. It carries out the reaction ATP-dependent cleavage of peptide bonds with broad specificity.. Its activity is regulated as follows. Allosterically activated by HslU binding. In terms of biological role, protease subunit of a proteasome-like degradation complex believed to be a general protein degrading machinery. This Desulfitobacterium hafniense (strain Y51) protein is ATP-dependent protease subunit HslV.